A 430-amino-acid chain; its full sequence is Glycine reductase complex component B subunits alpha and beta (430 aa).

Residue cysteine 242 is the Schiff-base intermediate with substrate; via pyruvic acid of the active site. Cysteine 242 is modified (pyruvic acid (Cys)).

As to quaternary structure, heterohexamer of two alpha, two beta and two gamma subunits. Component of the glycine reductase complex, together with components A and C. PB is substrate specific. In terms of processing, the peptide chain is cleaved into beta and alpha chains, and the alpha chain N-terminal cysteine is deaminated and oxidized to form a reactive pyruvoyl group.

It carries out the reaction acetyl phosphate + [thioredoxin]-disulfide + NH4(+) + H2O = [thioredoxin]-dithiol + glycine + phosphate + H(+). In terms of biological role, in the first step of glycine reductase, the substrate is bound to component PB via a Schiff base intermediate. Then the PB-activated substrate is nucleophilically attacked by the selenol anion of component PA to transform it to a carboxymethylated selenoether and the respective amine. By action of component PC, acetyl phosphate is formed, leaving component PA in its oxidized state. Finally component PA becomes reduced by the thioredoxin system to start a new catalytic cycle of reductive deamination. This Acetoanaerobium sticklandii (strain ATCC 12662 / DSM 519 / JCM 1433 / CCUG 9281 / NCIMB 10654 / HF) (Clostridium sticklandii) protein is Glycine reductase complex component B subunits alpha and beta (grdE).